A 501-amino-acid polypeptide reads, in one-letter code: Glycogenin-2 (501 aa).

UDP contacts are provided by Leu42, Thr44, Asn45, Tyr48, and Arg110. UDP-alpha-D-glucose contacts are provided by Leu42, Thr44, Asn45, Tyr48, Arg110, Lys119, Asp135, Ala136, Asp137, Asn166, Ser167, Asp193, Asp196, and Gln197. Residues Asp135, Ala136, and Asp137 each contribute to the UDP site. Asp135 lines the Mn(2+) pocket. Asp137 is a binding site for Mn(2+). O-linked (Glc...) tyrosine glycosylation is present at Tyr228. UDP is bound by residues His245, Gly248, and Lys251. His245 serves as a coordination point for Mn(2+). UDP-alpha-D-glucose-binding residues include Gly248 and Lys251. 3 positions are modified to phosphoserine: Ser368, Ser399, and Ser459.

Homodimer, tightly complexed to glycogen synthase. It depends on Mn(2+) as a cofactor. In terms of processing, self-glycosylated by the transfer of glucose residues from UDP-glucose to itself, forming an alpha-1,4-glycan of around 10 residues attached to Tyr-228. In terms of tissue distribution, detected in liver (at protein level). Expressed preferentially in liver, heart, and pancreas.

It localises to the cytoplasm. The protein resides in the nucleus. It catalyses the reaction L-tyrosyl-[glycogenin] + UDP-alpha-D-glucose = alpha-D-glucosyl-L-tyrosyl-[glycogenin] + UDP + H(+). The enzyme catalyses [1,4-alpha-D-glucosyl](n)-L-tyrosyl-[glycogenin] + UDP-alpha-D-glucose = [1,4-alpha-D-glucosyl](n+1)-L-tyrosyl-[glycogenin] + UDP + H(+). It functions in the pathway glycan biosynthesis; glycogen biosynthesis. Functionally, glycogenin participates in the glycogen biosynthetic process along with glycogen synthase and glycogen branching enzyme. It catalyzes the formation of a short alpha (1,4)-glucosyl chain covalently attached via a glucose 1-O-tyrosyl linkage to internal tyrosine residues and these chains act as primers for the elongation reaction catalyzed by glycogen synthase. The polypeptide is Glycogenin-2 (GYG2) (Homo sapiens (Human)).